We begin with the raw amino-acid sequence, 141 residues long: Hemoglobin subunit alpha (141 aa).

The 141-residue stretch at 1-141 (VLSADDKANV…VSTVLTSKYR (141 aa)) folds into the Globin domain. Residue Ser-3 is modified to Phosphoserine. N6-succinyllysine occurs at positions 7 and 11. The residue at position 16 (Lys-16) is an N6-acetyllysine; alternate. The residue at position 16 (Lys-16) is an N6-succinyllysine; alternate. Tyr-24 bears the Phosphotyrosine mark. The residue at position 35 (Ser-35) is a Phosphoserine. Lys-40 is subject to N6-succinyllysine. Ser-49 bears the Phosphoserine mark. His-58 is an O2 binding site. Residue His-87 participates in heme b binding. Position 102 is a phosphoserine (Ser-102). Thr-108 bears the Phosphothreonine mark. A phosphoserine mark is found at Ser-124 and Ser-131. Phosphothreonine occurs at positions 134 and 137. Ser-138 is subject to Phosphoserine.

The protein belongs to the globin family. Heterotetramer of two alpha chains and two beta chains. Red blood cells.

In terms of biological role, involved in oxygen transport from the lung to the various peripheral tissues. In Peromyscus californicus (California mouse), this protein is Hemoglobin subunit alpha.